A 437-amino-acid polypeptide reads, in one-letter code: GTPase Der (437 aa).

2 EngA-type G domains span residues 3–167 and 176–352; these read NLVA…KKES and PRFA…ENRM. GTP-binding positions include 9–16, 56–60, 119–122, 182–189, 229–233, and 294–297; these read GRPNVGKS, DTGGW, NKTD, GRPNAGKS, DTAGI, and NKWD. A KH-like domain is found at 353 to 437; the sequence is IKIPTARLNE…TPINIYIRQK (85 aa).

Belongs to the TRAFAC class TrmE-Era-EngA-EngB-Septin-like GTPase superfamily. EngA (Der) GTPase family. As to quaternary structure, associates with the 50S ribosomal subunit.

GTPase that plays an essential role in the late steps of ribosome biogenesis. This chain is GTPase Der, found in Bacteroides fragilis (strain ATCC 25285 / DSM 2151 / CCUG 4856 / JCM 11019 / LMG 10263 / NCTC 9343 / Onslow / VPI 2553 / EN-2).